The chain runs to 327 residues: Vacuolar protein sorting-associated protein 26A (327 aa).

The tract at residues Arg-306–Met-327 is disordered. Ser-315 is modified (phosphoserine). A compositionally biased stretch (polar residues) spans Pro-316–Met-327.

This sequence belongs to the VPS26 family. As to quaternary structure, component of the heterotrimeric retromer cargo-selective complex (CSC), also described as vacuolar protein sorting subcomplex (VPS), formed by VPS26 (VPS26A or VPS26B), VPS29 and VPS35. The CSC has a highly elongated structure with VPS26 and VPS29 binding independently at opposite distal ends of VPS35 as central platform. The CSC is believed to associate with variable sorting nexins to form functionally distinct retromer complex variants. The originally described retromer complex (also called SNX-BAR retromer) is a pentamer containing the CSC and a heterodimeric membrane-deforming subcomplex formed between SNX1 or SNX2 and SNX5 or SNX6 (also called SNX-BAR subcomplex); the respective CSC and SNX-BAR subcomplexes associate with low affinity. The CSC associates with SNX3 to form a SNX3-retromer complex. The CSC associates with SNX27, the WASH complex and the SNX-BAR subcomplex to form the SNX27-retromer complex. Interacts with VPS29, VPS35, SNX1, SNX2, SNX5, SNX6, SNX3, SNX27, RAB7A, ECPAS, EHD1, WASHC5, SORL1.

It is found in the cytoplasm. It localises to the endosome membrane. Its subcellular location is the early endosome. Its function is as follows. Acts as a component of the retromer cargo-selective complex (CSC). The CSC is believed to be the core functional component of retromer or respective retromer complex variants acting to prevent missorting of selected transmembrane cargo proteins into the lysosomal degradation pathway. The recruitment of the CSC to the endosomal membrane involves RAB7A and SNX3. The SNX-BAR retromer mediates retrograde transport of cargo proteins from endosomes to the trans-Golgi network (TGN) and is involved in endosome-to-plasma membrane transport for cargo protein recycling. The SNX3-retromer mediates the retrograde endosome-to-TGN transport of WLS distinct from the SNX-BAR retromer pathway. The SNX27-retromer is believed to be involved in endosome-to-plasma membrane trafficking and recycling of a broad spectrum of cargo proteins. The CSC seems to act as recruitment hub for other proteins, such as the WASH complex and TBC1D5. Required for retrograde transport of lysosomal enzyme receptor IGF2R. Required to regulate transcytosis of the polymeric immunoglobulin receptor (pIgR-pIgA). Required for the endosomal localization of WASHC2A (indicative for the WASH complex). Required for the endosomal localization of TBC1D5. Mediates retromer cargo recognition of SORL1 and is involved in trafficking of SORL1 implicated in sorting and processing of APP. Involved in retromer-independent lysosomal sorting of F2R. Involved in recycling of ADRB2. Enhances the affinity of SNX27 for PDZ-binding motifs in cargo proteins. In Homo sapiens (Human), this protein is Vacuolar protein sorting-associated protein 26A.